The following is a 361-amino-acid chain: Polyribonucleotide 5'-hydroxyl-kinase MJ1315 (361 aa).

Position 39–46 (39–46 (GGVDSGKT)) interacts with ATP.

It depends on a divalent metal cation as a cofactor.

It carries out the reaction a 5'-end dephospho-2'-deoxyribonucleoside-DNA + ATP = a 5'-end 5'-phospho-2'-deoxyribonucleoside-DNA + ADP + H(+). The catalysed reaction is a 5'-end dephospho-ribonucleoside-RNA + ATP = a 5'-end 5'-phospho-ribonucleoside-RNA + ADP + H(+). Functionally, polynucleotide kinase that can phosphorylate the 5'-hydroxyl groups of both single-stranded RNA (ssRNA) and single-stranded DNA (ssDNA). Exhibits a strong preference for ssRNA. The chain is Polyribonucleotide 5'-hydroxyl-kinase MJ1315 from Methanocaldococcus jannaschii (strain ATCC 43067 / DSM 2661 / JAL-1 / JCM 10045 / NBRC 100440) (Methanococcus jannaschii).